The primary structure comprises 600 residues: Calcium/calmodulin-dependent serine/threonine-protein kinase 1 (600 aa).

Residues 1 to 99 (MGLCHGKSAA…GGFKRPFPPP (99 aa)) are disordered. Low complexity predominate over residues 24 to 56 (TRVAEAAAAPAKPASPAPSAAAAAAAPAKPGTP). Positions 74 to 85 (YKGSPANSSVAS) are enriched in polar residues. The Protein kinase domain occupies 147-409 (YELGREVGRG…AAQALCHPWI (263 aa)). ATP is bound by residues 153–161 (VGRGHFGYT) and Lys179. Asp275 acts as the Proton acceptor in catalysis.

It belongs to the protein kinase superfamily. Ser/Thr protein kinase family. Post-translationally, autophosphorylated. As to expression, highly expressed in roots in the zone of cell division. Expressed in leaf mesophyll cells and at lower levels in mature stems.

The catalysed reaction is L-seryl-[protein] + ATP = O-phospho-L-seryl-[protein] + ADP + H(+). It catalyses the reaction L-threonyl-[protein] + ATP = O-phospho-L-threonyl-[protein] + ADP + H(+). With respect to regulation, activated by the binding of calmodulin-like protein 1 (CML1) in the presence of Ca(2+). Functionally, possesses kinase activity in vitro. This Oryza sativa subsp. japonica (Rice) protein is Calcium/calmodulin-dependent serine/threonine-protein kinase 1 (CAMK1).